We begin with the raw amino-acid sequence, 1159 residues long: ATP-dependent helicase/deoxyribonuclease subunit B (1159 aa).

The 275-residue stretch at 1 to 275 (MEFNTYIGRA…TYFNTFYRYN (275 aa)) folds into the UvrD-like helicase ATP-binding domain. 8 to 15 (GRAGTGKS) contributes to the ATP binding site. One can recognise a UvrD-like helicase C-terminal domain in the interval 269–583 (NTFYRYNNDD…SIGTMDLAKV (315 aa)). 4 residues coordinate [4Fe-4S] cluster: Cys784, Cys1112, Cys1115, and Cys1121.

It belongs to the helicase family. AddB/RexB type 1 subfamily. As to quaternary structure, heterodimer of AddA and AddB. The cofactor is Mg(2+). Requires [4Fe-4S] cluster as cofactor.

Its function is as follows. The heterodimer acts as both an ATP-dependent DNA helicase and an ATP-dependent, dual-direction single-stranded exonuclease. Recognizes the chi site generating a DNA molecule suitable for the initiation of homologous recombination. The AddB subunit has 5' -&gt; 3' nuclease activity but not helicase activity. The chain is ATP-dependent helicase/deoxyribonuclease subunit B from Staphylococcus epidermidis (strain ATCC 35984 / DSM 28319 / BCRC 17069 / CCUG 31568 / BM 3577 / RP62A).